The chain runs to 286 residues: tRNA (guanine-N(7)-)-methyltransferase (286 aa).

S-adenosyl-L-methionine-binding positions include Gly-91, 114 to 115 (EI), 158 to 159 (NS), and Leu-178. The active site involves Asp-181. 256–258 (TEE) serves as a coordination point for S-adenosyl-L-methionine.

This sequence belongs to the class I-like SAM-binding methyltransferase superfamily. TrmB family. Forms a complex with TRM82.

The protein localises to the nucleus. It carries out the reaction guanosine(46) in tRNA + S-adenosyl-L-methionine = N(7)-methylguanosine(46) in tRNA + S-adenosyl-L-homocysteine. It participates in tRNA modification; N(7)-methylguanine-tRNA biosynthesis. In terms of biological role, catalyzes the formation of N(7)-methylguanine at position 46 (m7G46) in tRNA. The protein is tRNA (guanine-N(7)-)-methyltransferase of Cryptococcus neoformans var. neoformans serotype D (strain B-3501A) (Filobasidiella neoformans).